Consider the following 194-residue polypeptide: Peptidyl-tRNA hydrolase (194 aa).

Tyr16 serves as a coordination point for tRNA. Catalysis depends on His21, which acts as the Proton acceptor. TRNA-binding residues include Phe67, Asn69, and Asn115.

It belongs to the PTH family. As to quaternary structure, monomer.

It is found in the cytoplasm. It carries out the reaction an N-acyl-L-alpha-aminoacyl-tRNA + H2O = an N-acyl-L-amino acid + a tRNA + H(+). Hydrolyzes ribosome-free peptidyl-tRNAs (with 1 or more amino acids incorporated), which drop off the ribosome during protein synthesis, or as a result of ribosome stalling. Functionally, catalyzes the release of premature peptidyl moieties from peptidyl-tRNA molecules trapped in stalled 50S ribosomal subunits, and thus maintains levels of free tRNAs and 50S ribosomes. The protein is Peptidyl-tRNA hydrolase of Salmonella dublin (strain CT_02021853).